The primary structure comprises 845 residues: Alanine--tRNA ligase (845 aa).

His552, His556, Cys653, and His657 together coordinate Zn(2+).

It belongs to the class-II aminoacyl-tRNA synthetase family. Zn(2+) is required as a cofactor.

It localises to the cytoplasm. The enzyme catalyses tRNA(Ala) + L-alanine + ATP = L-alanyl-tRNA(Ala) + AMP + diphosphate. Functionally, catalyzes the attachment of alanine to tRNA(Ala) in a two-step reaction: alanine is first activated by ATP to form Ala-AMP and then transferred to the acceptor end of tRNA(Ala). Also edits incorrectly charged Ser-tRNA(Ala) and Gly-tRNA(Ala) via its editing domain. The chain is Alanine--tRNA ligase from Campylobacter fetus subsp. fetus (strain 82-40).